Consider the following 379-residue polypeptide: Mannitol-1-phosphate 5-dehydrogenase (379 aa).

3–14 (ALHFGAGNIGRG) provides a ligand contact to NAD(+).

It belongs to the mannitol dehydrogenase family.

The catalysed reaction is D-mannitol 1-phosphate + NAD(+) = beta-D-fructose 6-phosphate + NADH + H(+). This chain is Mannitol-1-phosphate 5-dehydrogenase, found in Bacillus licheniformis (strain ATCC 14580 / DSM 13 / JCM 2505 / CCUG 7422 / NBRC 12200 / NCIMB 9375 / NCTC 10341 / NRRL NRS-1264 / Gibson 46).